Reading from the N-terminus, the 545-residue chain is Capsular polysaccharide phosphotransferase SacB (545 aa).

It belongs to the stealth family.

In terms of biological role, may be the polymerase that links individual UDP-N-acetyl-D-mannosamine monomers. In serotype A the capsule is composed of repeated units of (alpha 1-6)-linked N-acetyl-D-mannosamine-1-phosphate. The protein is Capsular polysaccharide phosphotransferase SacB (sacB) of Neisseria meningitidis serogroup A.